Here is a 641-residue protein sequence, read N- to C-terminus: MAQGSRAPSGPPLPVLPVDDWLNFRVDLFGDEHRRLLLEMLTQGCSNFVGLLNFGVPSPVYALEALVDFQVRNAFMKVKPVAQEIIRICILANHYRNSRDVLRDLRTQLDVLYSEPLKTRLLRGLIRLCRAAQTGVKPEDISVHLGADDVTFGVLKRALVRLHRVRDALGLRASPEAEARYPRLTTYNLLFHPPPFTTVEAVDLCAENLSDVTQRRNRPLRCLTSIKRPGSRTLEDALNDMYLLLTLRHLQLRHALELQMMQDWVVERCNRLCDALYFCYTQAPETRQTFVTLVRGLELARQHSSPAFQPMLYNLLQLLTQLHEANVYLCPGYLHFSAYKLLKKIQSVSDARERGEFGDEDEEQENDGEPREAQLDLEADPTAREGELFFFSKNLYGNGEVFRVPEQPSRYLRRRMFVERPETLQIFYNFHEGKITTETYHLQRIYSMMIEGASRQTGLTPKRFMELLDRAPLGQESEPEITEHRDLFADVFRRPVTDAASSSSASSSSSSASPNSVSLPSARSSSTRTTTPASTYTSAGTSSTTGLLLSSSSLSGSHGISSADLEQPPRQRRRMVSVTLFSPYSVAYSHHRRHRRRRSPPPAPRGPAHTRFQGPDSMPSTSYGSDVEDPRDDLAENLRHL.

3 disordered regions span residues 353 to 373 (ERGEFGDEDEEQENDGEPREA), 500 to 572 (ASSS…PRQR), and 587 to 641 (AYSH…LRHL). The span at 358–367 (GDEDEEQEND) shows a compositional bias: acidic residues. Residues 500–563 (ASSSSASSSS…LSGSHGISSA (64 aa)) show a composition bias toward low complexity. The segment covering 589–599 (SHHRRHRRRRS) has biased composition (basic residues). The span at 632-641 (DDLAENLRHL) shows a compositional bias: basic and acidic residues.

The protein belongs to the herpesviridae pp85 family. In terms of assembly, interacts with UL82. Interacts with isoform UL35A. Interacts with host UBP7; this interaction significantly inhibits the ability of USP7 to form nuclear bodies. Interacts with host DCAF1 (via C-terminus). Interacts with host SNX5; this interaction allows proper gB localization during viral assembly. Interacts with host TBK1; this interaction prevents type I interferon production. Interacts with UL82. Interacts with isoform UL35. Interacts with host UBP7; this interaction significantly inhibits the ability of USP7 to form nuclear bodies. Interacts with host SNX5; this interaction allows proper gB localization during viral assembly.

The protein resides in the virion tegument. It is found in the host nucleus. It localises to the host cytoplasm. Functionally, plays important role in immediate-early gene expression through interaction with UL82. Forms nuclear bodies in host nucleus, independently of PML. In turn, UL35 nuclear bodies associate with and remodel PML bodies. Through interaction with host DCAF1, causes cells to accumulate in the G2 phase of the cell cycle by inducing a DNA damage response. Regulates viral assembly by controlling the localization of the essential gB through regulation of a retrograde transport pathway. This modulation occurs via binding and inhibition of host sorting nexin 5/SNX5. Also plays a role in the inhibition of pattern recognition receptor-mediated type I interferon signaling at the level of TBK1. In terms of biological role, promotes cytoplasmic UL82 accumulation and inhibits UL35-containing nuclear bodies formation. Regulates viral assembly by controlling the localization of the essential gB through regulation of a retrograde transport pathway. This modulation occurs via binding and inhibition of host sorting nexin 5/SNX5. The sequence is that of Tegument protein UL35 (UL35) from Homo sapiens (Human).